Consider the following 315-residue polypeptide: PDZ domain-containing protein GIPC2 (315 aa).

The span at 1 to 12 (MPLKLRGKKKAK) shows a compositional bias: basic residues. Residues 1–34 (MPLKLRGKKKAKSKETAGLVEGEPTGAGGGSLSA) form a disordered region. Positions 117 to 197 (EVNVYKSEDS…EELFTMKLIE (81 aa)) constitute a PDZ domain.

This sequence belongs to the GIPC family. Probably interacts with SEMA5A. As to expression, expressed at highest levels in ascending colon and at moderate levels in adult kidney. Expressed at low levels in adult pancreas and at very low levels in adult liver. Expression is down-regulated in several primary tumors, such as kidney, colon and rectal tumors.

It localises to the cytoplasm. The polypeptide is PDZ domain-containing protein GIPC2 (GIPC2) (Homo sapiens (Human)).